The primary structure comprises 146 residues: Thyroid hormone-inducible hepatic protein (146 aa).

Residues 83–104 form a disordered region; that stretch reads KVAGSEENGTAETEEVEDESAS. Residues 94 to 104 are compositionally biased toward acidic residues; it reads ETEEVEDESAS.

Belongs to the SPOT14 family. In terms of assembly, homodimer. Heterodimer with MID1IP1. Interacts with THRB and PLAGL1. In terms of tissue distribution, mainly expressed in tissues that synthesize triglycerides.

Its subcellular location is the nucleus. It localises to the cytoplasm. Its function is as follows. Plays a role in the regulation of lipogenesis, especially in lactating mammary gland. Important for the biosynthesis of triglycerides with medium-length fatty acid chains. May modulate lipogenesis by interacting with MID1IP1 and preventing its interaction with ACACA. May function as transcriptional coactivator. May modulate the transcription factor activity of THRB. The chain is Thyroid hormone-inducible hepatic protein (THRSP) from Homo sapiens (Human).